The chain runs to 332 residues: UDP-3-O-acylglucosamine N-acyltransferase (332 aa).

The active-site Proton acceptor is histidine 235.

This sequence belongs to the transferase hexapeptide repeat family. LpxD subfamily. As to quaternary structure, homotrimer.

It carries out the reaction a UDP-3-O-[(3R)-3-hydroxyacyl]-alpha-D-glucosamine + a (3R)-hydroxyacyl-[ACP] = a UDP-2-N,3-O-bis[(3R)-3-hydroxyacyl]-alpha-D-glucosamine + holo-[ACP] + H(+). It participates in bacterial outer membrane biogenesis; LPS lipid A biosynthesis. Catalyzes the N-acylation of UDP-3-O-acylglucosamine using 3-hydroxyacyl-ACP as the acyl donor. Is involved in the biosynthesis of lipid A, a phosphorylated glycolipid that anchors the lipopolysaccharide to the outer membrane of the cell. This is UDP-3-O-acylglucosamine N-acyltransferase from Fusobacterium nucleatum subsp. nucleatum (strain ATCC 25586 / DSM 15643 / BCRC 10681 / CIP 101130 / JCM 8532 / KCTC 2640 / LMG 13131 / VPI 4355).